The primary structure comprises 246 residues: Probable phosphatase AHA_1344 (246 aa).

Positions 8, 10, 16, 41, 74, 102, 132, 193, and 195 each coordinate Zn(2+).

It belongs to the PHP family. Zn(2+) serves as cofactor.

This Aeromonas hydrophila subsp. hydrophila (strain ATCC 7966 / DSM 30187 / BCRC 13018 / CCUG 14551 / JCM 1027 / KCTC 2358 / NCIMB 9240 / NCTC 8049) protein is Probable phosphatase AHA_1344.